Here is a 491-residue protein sequence, read N- to C-terminus: 3-octaprenyl-4-hydroxybenzoate carboxy-lyase (491 aa).

Asparagine 172 lines the Mn(2+) pocket. Residues 175 to 177, 189 to 191, and 194 to 195 contribute to the prenylated FMN site; these read IYR, RWL, and RG. Glutamate 238 contacts Mn(2+). The Proton donor role is filled by aspartate 287.

It belongs to the UbiD family. In terms of assembly, homohexamer. Requires prenylated FMN as cofactor. Mn(2+) serves as cofactor.

The protein resides in the cell membrane. It catalyses the reaction a 4-hydroxy-3-(all-trans-polyprenyl)benzoate + H(+) = a 2-(all-trans-polyprenyl)phenol + CO2. It participates in cofactor biosynthesis; ubiquinone biosynthesis. Catalyzes the decarboxylation of 3-octaprenyl-4-hydroxy benzoate to 2-octaprenylphenol, an intermediate step in ubiquinone biosynthesis. The sequence is that of 3-octaprenyl-4-hydroxybenzoate carboxy-lyase from Alcanivorax borkumensis (strain ATCC 700651 / DSM 11573 / NCIMB 13689 / SK2).